A 361-amino-acid polypeptide reads, in one-letter code: 3-dehydroquinate synthase (361 aa).

This sequence belongs to the archaeal-type DHQ synthase family.

It catalyses the reaction 2-amino-2,3,7-trideoxy-D-lyxo-hept-6-ulosonate + NAD(+) + H2O = 3-dehydroquinate + NH4(+) + NADH + H(+). Functionally, catalyzes the oxidative deamination and cyclization of 2-amino-3,7-dideoxy-D-threo-hept-6-ulosonic acid (ADH) to yield 3-dehydroquinate (DHQ), which is fed into the canonical shikimic pathway of aromatic amino acid biosynthesis. This Methanococcus maripaludis (strain DSM 14266 / JCM 13030 / NBRC 101832 / S2 / LL) protein is 3-dehydroquinate synthase.